Consider the following 240-residue polypeptide: MRQSGRKSNQLRPISLELSPLINAEGSCLIKIGNTHVMCSATCETTVPPFLRGQNQGWITAEYGMIPGSTSHRIKREAALGKQGGRTQEIQRLIGRAMRCVINLQKLGERQIIIDCDVINADGGTRTAAITGSYVALHLAIRSLMKKRILKVNPLISQIAAISCGIYKGNAVLDLDYLEDSDAEVDSNFVFACNGNLIEVQGTAEKEPFSEEQFLAMLKLAKSGVVELFKLQNQVLIAAE.

Phosphate is bound by residues R86 and 124–126 (GTR).

This sequence belongs to the RNase PH family. As to quaternary structure, homohexameric ring arranged as a trimer of dimers.

It carries out the reaction tRNA(n+1) + phosphate = tRNA(n) + a ribonucleoside 5'-diphosphate. Its function is as follows. Phosphorolytic 3'-5' exoribonuclease that plays an important role in tRNA 3'-end maturation. Removes nucleotide residues following the 3'-CCA terminus of tRNAs; can also add nucleotides to the ends of RNA molecules by using nucleoside diphosphates as substrates, but this may not be physiologically important. Probably plays a role in initiation of 16S rRNA degradation (leading to ribosome degradation) during starvation. The protein is Ribonuclease PH of Rickettsia prowazekii (strain Madrid E).